The chain runs to 212 residues: Ras-related protein Rab-15 (212 aa).

Residues Ser-17, Gly-18, Val-19, Gly-20, Lys-21, Thr-22, Cys-23, Ser-35, Ser-39, and Thr-40 each coordinate GTP. Mg(2+) is bound at residue Thr-22. 2 short sequence motifs (switch) span residues 31-45 and 63-80; these read NEFHSSHISTIGVDF and DTAGQERYQTITKQYYRR. Residues Thr-40 and Asp-63 each contribute to the Mg(2+) site. 6 residues coordinate GTP: Gly-66, Asn-121, Lys-122, Asp-124, Ser-151, and Ala-152. A disordered region spans residues 192-212; it reads ELEEDEGKPEGPANSSKTCWC. 2 S-geranylgeranyl cysteine lipidation sites follow: Cys-210 and Cys-212. Cys-212 is modified (cysteine methyl ester).

This sequence belongs to the small GTPase superfamily. Rab family. As to quaternary structure, the GTP bound form of RAB15 interacts with REP15. Interacts (GTP-bound form) with MICAL1, MICAL3, MICALCL, EHBP1 and EHBP1L1. Mg(2+) is required as a cofactor.

It localises to the cell membrane. The catalysed reaction is GTP + H2O = GDP + phosphate + H(+). Its activity is regulated as follows. Regulated by guanine nucleotide exchange factors (GEFs) which promote the exchange of bound GDP for free GTP. Regulated by GTPase activating proteins (GAPs) which increase the GTP hydrolysis activity. Inhibited by GDP dissociation inhibitors (GDIs). The small GTPases Rab are key regulators of intracellular membrane trafficking, from the formation of transport vesicles to their fusion with membranes. Rabs cycle between an inactive GDP-bound form and an active GTP-bound form that is able to recruit to membranes different sets of downstream effectors directly responsible for vesicle formation, movement, tethering and fusion. RAB15 may act in concert with RAB3A in regulating aspects of synaptic vesicle membrane flow within the nerve terminal. This is Ras-related protein Rab-15 from Mus musculus (Mouse).